A 196-amino-acid chain; its full sequence is Glycerol-3-phosphate acyltransferase 2 (196 aa).

5 helical membrane-spanning segments follow: residues 2–22, 52–72, 80–100, 112–132, and 137–156; these read GWWL…SYLI, VGGI…FITI, IVSL…FMKF, IIFC…LVIV, and YASL…GYLL.

This sequence belongs to the PlsY family. Probably interacts with PlsX.

It is found in the cell inner membrane. The enzyme catalyses an acyl phosphate + sn-glycerol 3-phosphate = a 1-acyl-sn-glycero-3-phosphate + phosphate. It participates in lipid metabolism; phospholipid metabolism. Functionally, catalyzes the transfer of an acyl group from acyl-phosphate (acyl-PO(4)) to glycerol-3-phosphate (G3P) to form lysophosphatidic acid (LPA). This enzyme utilizes acyl-phosphate as fatty acyl donor, but not acyl-CoA or acyl-ACP. The protein is Glycerol-3-phosphate acyltransferase 2 of Thermotoga maritima (strain ATCC 43589 / DSM 3109 / JCM 10099 / NBRC 100826 / MSB8).